Consider the following 321-residue polypeptide: MAKGLLIVNLGSPVSPETKDVRRYLREFLSDQNVITMPKALWQPILRGFILPFRSWRSATFYKHEWTQAGSPLIAYTQVTRDRLRERLPDWDVQMAMNYGGEYPIGETLQTMAARGDAPIVVIPLFPEYTQSTTKTILDKVAASGVKTVVIDRFYDHSDYQKILAQQIDDAYEAGAYDTVILSYHGIPTAMVRHGDPYQQECETTTAGVKQYLKKVPQTKVEMCYQSKFGPVPWLKPYLRNRLMELAALGKRNVLVATPSFVADCLETLEENNVQNYQTFRANGGKNFATVRPMNGCEPFCDFLAKLAEDKIAAEANHGKA.

Fe(2+) is bound by residues histidine 185 and glutamate 267.

This sequence belongs to the ferrochelatase family.

Its subcellular location is the cytoplasm. It carries out the reaction Fe-coproporphyrin III + 2 H(+) = coproporphyrin III + Fe(2+). Its pathway is porphyrin-containing compound metabolism; protoheme biosynthesis. Functionally, involved in coproporphyrin-dependent heme b biosynthesis. Catalyzes the insertion of ferrous iron into coproporphyrin III to form Fe-coproporphyrin III. This is Coproporphyrin III ferrochelatase from Lacticaseibacillus paracasei (strain ATCC 334 / BCRC 17002 / CCUG 31169 / CIP 107868 / KCTC 3260 / NRRL B-441) (Lactobacillus paracasei).